A 760-amino-acid polypeptide reads, in one-letter code: Translocation protein SEC63 homolog (760 aa).

Residues 1–14 (MAGQQFQYDDSGNT) are Lumenal-facing. A helical membrane pass occupies residues 15 to 35 (FFYFLTSFVGLIVIPATYYLW). Residues 36–69 (PRDQNAEQIRLKNIRKVYGRCMWYRLRLLKPQPN) lie on the Cytoplasmic side of the membrane. Residues 70-90 (IIPTVKKIVLLAGWALFLFLA) traverse the membrane as a helical segment. The Lumenal segment spans residues 91 to 188 (YKVSKTDREY…LPAWIVDQKN (98 aa)). The J domain occupies 104–165 (NPYEVLNLDP…ESRKNWEEFG (62 aa)). The chain crosses the membrane as a helical span at residues 189–209 (SILVLLVYGLAFMVILPVVVG). Residues 197–541 (GLAFMVILPV…LKKKPTPVLL (345 aa)) enclose the SEC63 1 domain. Residues 210-760 (SWWYRSIRYS…EEEEEEEDDD (551 aa)) lie on the Cytoplasmic side of the membrane. The interval 492 to 617 (AEEQPAEDGQ…DDEAEWQELQ (126 aa)) is disordered. Positions 518–536 (KGPKKTAKSKKKKPLKKKP) are enriched in basic residues. A Phosphothreonine modification is found at Thr-537. Over residues 582-608 (NRDSQSEKDDGSDRDSDREQDEKQNKD) the composition is skewed to basic and acidic residues. Residues 597–635 (SDREQDEKQNKDDEAEWQELQQSIQRKERALLETKSKIT) are a coiled coil. The 78-residue stretch at 637-714 (PVYSLYFPEE…GLDQIKPLKL (78 aa)) folds into the SEC63 2 domain. The disordered stretch occupies residues 720 to 760 (KPVPENHPQWDTAIEGDEDQEDSEGFEDSFEEEEEEEEDDD). A compositionally biased stretch (acidic residues) spans 733 to 760 (IEGDEDQEDSEGFEDSFEEEEEEEEDDD). Ser-742 and Ser-748 each carry phosphoserine.

The ER translocon complex consists of channel-forming core components SEC61A1, SEC61B and SEC61G and different auxiliary components such as SEC62 and SEC63. Widely expressed, with high levels in the liver.

The protein localises to the endoplasmic reticulum membrane. In terms of biological role, mediates cotranslational and post-translational transport of certain precursor polypeptides across endoplasmic reticulum (ER). Proposed to play an auxiliary role in recognition of precursors with short and apolar signal peptides. May cooperate with SEC62 and HSPA5/BiP to facilitate targeting of small presecretory proteins into the SEC61 channel-forming translocon complex, triggering channel opening for polypeptide translocation to the ER lumen. Required for efficient PKD1/Polycystin-1 biogenesis and trafficking to the plasma membrane of the primary cilia. This chain is Translocation protein SEC63 homolog, found in Homo sapiens (Human).